The primary structure comprises 350 residues: D-alanine--D-alanine ligase (350 aa).

The region spanning Lys134 to Ser337 is the ATP-grasp domain. Ile160 to Tyr212 serves as a coordination point for ATP. Asp289, Glu301, and Asn303 together coordinate Mg(2+).

It belongs to the D-alanine--D-alanine ligase family. Mg(2+) is required as a cofactor. The cofactor is Mn(2+).

Its subcellular location is the cytoplasm. It carries out the reaction 2 D-alanine + ATP = D-alanyl-D-alanine + ADP + phosphate + H(+). It functions in the pathway cell wall biogenesis; peptidoglycan biosynthesis. Functionally, cell wall formation. This Helicobacter hepaticus (strain ATCC 51449 / 3B1) protein is D-alanine--D-alanine ligase.